Consider the following 155-residue polypeptide: Large-conductance mechanosensitive channel (155 aa).

The next 2 helical transmembrane spans lie at 25–45 (VLDL…VTSL) and 98–118 (GDFI…FLIV).

It belongs to the MscL family. As to quaternary structure, homopentamer.

It is found in the cell inner membrane. Its function is as follows. Channel that opens in response to stretch forces in the membrane lipid bilayer. May participate in the regulation of osmotic pressure changes within the cell. This chain is Large-conductance mechanosensitive channel, found in Novosphingobium aromaticivorans (strain ATCC 700278 / DSM 12444 / CCUG 56034 / CIP 105152 / NBRC 16084 / F199).